The sequence spans 341 residues: Ribonucleoside-diphosphate reductase subunit beta (341 aa).

Fe cation contacts are provided by Asp89, Glu120, and His123. Residue Tyr127 is part of the active site. Fe cation contacts are provided by Glu185, Glu219, and His222.

It belongs to the ribonucleoside diphosphate reductase small chain family. In terms of assembly, tetramer of two alpha and two beta subunits. Fe cation serves as cofactor.

It carries out the reaction a 2'-deoxyribonucleoside 5'-diphosphate + [thioredoxin]-disulfide + H2O = a ribonucleoside 5'-diphosphate + [thioredoxin]-dithiol. Provides the precursors necessary for DNA synthesis. Catalyzes the biosynthesis of deoxyribonucleotides from the corresponding ribonucleotides. This chain is Ribonucleoside-diphosphate reductase subunit beta (nrdB), found in Helicobacter pylori (strain J99 / ATCC 700824) (Campylobacter pylori J99).